Here is a 265-residue protein sequence, read N- to C-terminus: 5'-nucleotidase SurE (265 aa).

A divalent metal cation is bound by residues Asp-8, Asp-9, Ser-39, and Asn-96.

Belongs to the SurE nucleotidase family. Requires a divalent metal cation as cofactor.

The protein localises to the cytoplasm. The enzyme catalyses a ribonucleoside 5'-phosphate + H2O = a ribonucleoside + phosphate. Functionally, nucleotidase that shows phosphatase activity on nucleoside 5'-monophosphates. In Dehalococcoides mccartyi (strain ATCC BAA-2266 / KCTC 15142 / 195) (Dehalococcoides ethenogenes (strain 195)), this protein is 5'-nucleotidase SurE.